A 417-amino-acid chain; its full sequence is Serpin H1 (417 aa).

Positions Met1 to Ala17 are cleaved as a signal peptide. Residue Lys93 is modified to N6-succinyllysine. Asn119 and Asn124 each carry an N-linked (GlcNAc...) asparagine glycan. Ser140 carries the phosphoserine modification. Lys206 carries the N6-acetyllysine modification. Residue Lys295 is modified to N6-succinyllysine. Position 318 is an N6-acetyllysine (Lys318). Asn394 carries an N-linked (GlcNAc...) asparagine glycan. The short motif at Arg414–Leu417 is the Prevents secretion from ER element.

The protein belongs to the serpin family.

It is found in the endoplasmic reticulum lumen. Functionally, binds specifically to collagen. Could be involved as a chaperone in the biosynthetic pathway of collagen. The polypeptide is Serpin H1 (Serpinh1) (Rattus norvegicus (Rat)).